The sequence spans 338 residues: Aspartate-semialdehyde dehydrogenase (338 aa).

Residues 13–16 (SGAV) and 41–42 (RS) each bind NADP(+). Position 101 (arginine 101) interacts with phosphate. Cysteine 132 serves as the catalytic Acyl-thioester intermediate. Glutamine 159 is a binding site for substrate. Residues 162-163 (SG) and proline 187 each bind NADP(+). Lysine 216 serves as a coordination point for phosphate. Position 238 (arginine 238) interacts with substrate. Histidine 245 functions as the Proton acceptor in the catalytic mechanism. Asparagine 317 is an NADP(+) binding site.

It belongs to the aspartate-semialdehyde dehydrogenase family. In terms of assembly, homodimer.

It carries out the reaction L-aspartate 4-semialdehyde + phosphate + NADP(+) = 4-phospho-L-aspartate + NADPH + H(+). It functions in the pathway amino-acid biosynthesis; L-lysine biosynthesis via DAP pathway; (S)-tetrahydrodipicolinate from L-aspartate: step 2/4. The protein operates within amino-acid biosynthesis; L-methionine biosynthesis via de novo pathway; L-homoserine from L-aspartate: step 2/3. Its pathway is amino-acid biosynthesis; L-threonine biosynthesis; L-threonine from L-aspartate: step 2/5. Its function is as follows. Catalyzes the NADPH-dependent formation of L-aspartate-semialdehyde (L-ASA) by the reductive dephosphorylation of L-aspartyl-4-phosphate. The protein is Aspartate-semialdehyde dehydrogenase of Shewanella sp. (strain DB6705).